Reading from the N-terminus, the 312-residue chain is DNA-directed RNA polymerase subunit alpha (312 aa).

The tract at residues 1-226 (MIEFEKPIIT…EHLNLFTDLT (226 aa)) is alpha N-terminal domain (alpha-NTD). The segment at 243-312 (DEKVLDRTIE…DLGLGLKNDK (70 aa)) is alpha C-terminal domain (alpha-CTD).

The protein belongs to the RNA polymerase alpha chain family. In terms of assembly, homodimer. The RNAP catalytic core consists of 2 alpha, 1 beta, 1 beta' and 1 omega subunit. When a sigma factor is associated with the core the holoenzyme is formed, which can initiate transcription.

The enzyme catalyses RNA(n) + a ribonucleoside 5'-triphosphate = RNA(n+1) + diphosphate. DNA-dependent RNA polymerase catalyzes the transcription of DNA into RNA using the four ribonucleoside triphosphates as substrates. This is DNA-directed RNA polymerase subunit alpha from Streptococcus pyogenes serotype M3 (strain ATCC BAA-595 / MGAS315).